A 329-amino-acid chain; its full sequence is Short-chain dehydrogenase/reductase prx4 (329 aa).

The signal sequence occupies residues 1–21 (MIPRWQPASIALLLHLDTLRC). NADP(+)-binding residues include Ser-58, Ile-60, and Asn-81. An N-linked (GlcNAc...) asparagine glycan is attached at Asn-91. The NADP(+) site is built by Asp-98, Asn-121, Lys-161, Tyr-194, Lys-198, and Thr-229. The active-site Proton acceptor is Tyr-194. The active-site Lowers pKa of active site Tyr is Lys-198. The helical transmembrane segment at 238-258 (GPLMAAGLPVSSAHMVGLAVV) threads the bilayer.

Belongs to the short-chain dehydrogenases/reductases (SDR) family.

Its subcellular location is the membrane. It participates in sesquiterpene biosynthesis. Its function is as follows. Short-chain dehydrogenase/reductase; part of the gene cluster that mediates the biosynthesis of PR-toxin, a bicyclic sesquiterpene belonging to the eremophilane class and acting as a mycotoxin. The first step of the pathway is catalyzed by the aristolochene synthase which performs the cyclization of trans,trans-farnesyl diphosphate (FPP) to the bicyclic sesquiterpene aristolochene. Following the formation of aristolochene, the non-oxygenated aristolochene is converted to the trioxygenated intermediate eremofortin B, via 7-epi-neopetasone. This conversion appears to involve three enzymes, a hydroxysterol oxidase-like enzyme, the quinone-oxidase prx3 that forms the quinone-type-structure in the bicyclic nucleus of aristolochene with the C8-oxo group and the C-3 hydroxyl group, and the P450 monooxygenase prx9 that introduces the epoxide at the double bond between carbons 1 and 2. No monoxy or dioxy-intermediates have been reported to be released to the broth, so these three early oxidative reactions may be coupled together. Eremofortin B is further oxidized by another P450 monooxygenase, that introduces a second epoxide between carbons 7 and 11 prior to acetylation to eremofortin A by the acetyltransferase prx11. The second epoxidation may be performed by a second P450 monooxygenase. After the acetylation step, eremofortin A is converted to eremofortin C and then to PR-toxin. First the conversion of eremofortin A to eremofortin C proceeds by oxidation of the side chain of the molecule at C-12 and is catalyzed by the short-chain oxidoreductase prx1. The cytochrome P450 monooxygenase prx8 also plays a role in this step. The primary alcohol formed at C-12 is finally oxidized by the short-chain alcohol dehydrogenase prx4 that forms PR-toxin. The chain is Short-chain dehydrogenase/reductase prx4 from Penicillium rubens (strain ATCC 28089 / DSM 1075 / NRRL 1951 / Wisconsin 54-1255) (Penicillium chrysogenum).